The sequence spans 735 residues: MDLLSNLRRSSIVLNRFYVKSLSQSDLTAYEYRCIFKKTPELGDEKRLLASICYKLGAIAVRIGSNIITKEAVRPEKLQGHDWQLVQMGTKQLDCRNDAHRCALETFERKFLERDLSASSQTEVRKAAEGGLIWWVVGAKGIEKSGNGWEVHRGRRIDVSLDAEGNLYLEIDIHHRFYTPWTVHQWLEQYPEIPLSYVRNNYLDERHGFINWQYGRFTQERPQDILLDCLGMSLAEYHLNKGATEEEVQQSYVVYVKPISWRKGKLTAHLSRRLSPSLTMEMLAKVAEDSTVCDREKREIRAVFKSIKQSINQRLQEAQKTASWILTKTYGISSPAIALSCDGYLLPAAKLLAANKQPVSKTADIRNKGCAKIGETSFGYLNLYNNQLQYPLEVHKCLLEIANKNNLQLSLDQRRVLSDYPQDDLDQQMFWQTWSSQGIKTVLVVMPWDSHHDKQKIRIQAIQAGIATQFMVPLPKADKYKALNVTLGLLCKAGWQPIQLESVDHPEVADLIIGFDTGTNRELYYGTSAFAVLADGQSLGWELPAVQRGETFSGQAIWQTVSKLIIKFYQICQRYPQKLLLMRDGLVQEGEFQQTIELLKERKIAVDVISVRKSGAGRMGQEIYENGQLVYRDAAIGSVILQPAERSFIMVTSQPVSKTIGSIRPLRIVHEYGSTDLELLALQTYHLTQLHPASGFRSCRLPWVLHLADRSSKEFQRIGQISVLQNISRDKLIAV.

The N-terminal domain stretch occupies residues 1-94 (MDLLSNLRRS…LVQMGTKQLD (94 aa)). Residues 95 to 180 (CRNDAHRCAL…IDIHHRFYTP (86 aa)) form a linker L1 region. The segment at 181 to 284 (WTVHQWLEQY…SPSLTMEMLA (104 aa)) is PAZ domain. Residues 285–369 (KVAEDSTVCD…SKTADIRNKG (85 aa)) are linker L2. A mid domain region spans residues 370 to 498 (CAKIGETSFG…LLCKAGWQPI (129 aa)). Residues 499–735 (QLESVDHPEV…NISRDKLIAV (237 aa)) are PIWI domain. Catalysis depends on residues Asp-516, Glu-550, Asp-584, and Asp-709. Position 516 (Asp-516) interacts with Mn(2+). Mn(2+)-binding residues include Asp-584, Asp-709, and Val-735.

It belongs to the argonaute family. Long pAgo subfamily. Copurifies with SSB proteins Synpcc7942_0079 and Synpcc7942_0301 as well as other proteins. Mn(2+) is required as a cofactor.

Functionally, a DNA-guided ssDNA endonuclease that might play a role in defense against invading mobile genetic elements. Uses short ssDNA sequences as guides (gDNA) to bind complementary target strands, resulting in cleavage of the target DNA (tDNA). The cleavage site is 10 nucleotides (nt) downstream of the target residue base-paired with the 5'-end of the gDNA. Both 5'-P and 5'-OH gDNAs confer activity; a 5'-OH guide cleaves between nt 10-11 and nt 11-12. Guide DNA mismatches in the seed (nt 2-9) can enhance activity, mismatches 1-5 nt after the cleavage site block activity. Has no appreciable activity with guide RNA or on target RNA. In situ binds to 5'-phosphorylated DNA 14-20 nt in length; small DNA maps over the chromosome and plasmid with some preference for the replication origin and the probable termination site. Also has weak guide-independent nuclease activity on DNA called 'chopping'. Overexpression of wild-type or catalytically inactive mutant has no visible effect during growth under continuous high light for up to a month. The polypeptide is Protein argonaute (Synechococcus elongatus (strain ATCC 33912 / PCC 7942 / FACHB-805) (Anacystis nidulans R2)).